Consider the following 222-residue polypeptide: Deoxyribose-phosphate aldolase (222 aa).

Asp-90 serves as the catalytic Proton donor/acceptor. Residue Lys-152 is the Schiff-base intermediate with acetaldehyde of the active site. Lys-181 (proton donor/acceptor) is an active-site residue.

Belongs to the DeoC/FbaB aldolase family. DeoC type 1 subfamily.

Its subcellular location is the cytoplasm. It carries out the reaction 2-deoxy-D-ribose 5-phosphate = D-glyceraldehyde 3-phosphate + acetaldehyde. It functions in the pathway carbohydrate degradation; 2-deoxy-D-ribose 1-phosphate degradation; D-glyceraldehyde 3-phosphate and acetaldehyde from 2-deoxy-alpha-D-ribose 1-phosphate: step 2/2. Catalyzes a reversible aldol reaction between acetaldehyde and D-glyceraldehyde 3-phosphate to generate 2-deoxy-D-ribose 5-phosphate. This is Deoxyribose-phosphate aldolase from Pectobacterium atrosepticum (strain SCRI 1043 / ATCC BAA-672) (Erwinia carotovora subsp. atroseptica).